The primary structure comprises 341 residues: Serine/threonine-protein kinase pdik1l (341 aa).

In terms of domain architecture, Protein kinase spans 8–332 (YELIQEVGRG…FELELRLVRI (325 aa)). 14 to 22 (VGRGSYGVV) is a binding site for ATP. Catalysis depends on aspartate 164, which acts as the Proton acceptor.

The protein belongs to the protein kinase superfamily. Ser/Thr protein kinase family.

The protein resides in the nucleus. The enzyme catalyses L-seryl-[protein] + ATP = O-phospho-L-seryl-[protein] + ADP + H(+). It catalyses the reaction L-threonyl-[protein] + ATP = O-phospho-L-threonyl-[protein] + ADP + H(+). The protein is Serine/threonine-protein kinase pdik1l (pdik1l) of Danio rerio (Zebrafish).